Consider the following 161-residue polypeptide: Arachidonate 5-lipoxygenase-activating protein (161 aa).

Residues 1–8 (MDQETVGN) lie on the Lumenal side of the membrane. A helical transmembrane segment spans residues 9-30 (VVLLAIVTLISVVQNGFFAHKV). Residues 31–52 (EHESRTQNGRSFQRTGTLAFER) are Cytoplasmic-facing. The helical transmembrane segment at 53-77 (VYTANQNCVDAYPTFLAVLWSAGLL) threads the bilayer. At 78–80 (CSQ) the chain is on the lumenal side. The chain crosses the membrane as a helical span at residues 81–102 (VPAAFAGLMYLFVRQKYFVGYL). Residues 103 to 107 (GERTQ) lie on the Cytoplasmic side of the membrane. An intramembrane segment occupies 108 to 115 (STPGYIFG). The chain crosses the membrane as a helical span at residues 116 to 128 (KRIILFLFLMSVA). At 129 to 161 (GIFNYYLIFFFGSDFENYIKTISTTISPLLLIP) the chain is on the lumenal side.

It belongs to the MAPEG family. As to quaternary structure, homotrimer. Interacts with LTC4S and ALOX5.

Its subcellular location is the nucleus membrane. It localises to the endoplasmic reticulum membrane. Its function is as follows. Required for leukotriene biosynthesis by ALOX5 (5-lipoxygenase). Anchors ALOX5 to the membrane. Binds arachidonic acid, and could play an essential role in the transfer of arachidonic acid to ALOX5. Binds to MK-886, a compound that blocks the biosynthesis of leukotrienes. This is Arachidonate 5-lipoxygenase-activating protein (ALOX5AP) from Homo sapiens (Human).